Consider the following 329-residue polypeptide: BTB/POZ domain-containing adapter for CUL3-mediated RhoA degradation protein 1 (329 aa).

Residues 1–22 are compositionally biased toward low complexity; sequence MSAEASGPAAAAAPSLEAPKPS. The tract at residues 1 to 31 is disordered; it reads MSAEASGPAAAAAPSLEAPKPSGLEPGPAAY. Residues 41–109 enclose the BTB domain; sequence KYVKLNVGGS…LRDGSVPLPE (69 aa). The tract at residues 282–303 is disordered; sequence ATGGAAGAGGAGRGEDEENREH.

This sequence belongs to the BACURD family. As to quaternary structure, homotetramer; forms a two-fold symmetric tetramer in solution. Interacts with CUL3; interaction is direct and forms a 5:5 heterodecamer. Component of the BCR(KCTD13) E3 ubiquitin ligase complex, at least composed of CUL3, KCTD13/BACURD1 and RBX1. Interacts with RHOA; with a preference for RhoA-GDP. Interacts with POLD2 and PCNA. Interacts with SPRTN. Expressed in a wide variety of tissues.

It localises to the nucleus. The protein operates within protein modification; protein ubiquitination. Its function is as follows. Substrate-specific adapter of a BCR (BTB-CUL3-RBX1) E3 ubiquitin-protein ligase complex required for synaptic transmission. The BCR(KCTD13) E3 ubiquitin ligase complex mediates the ubiquitination of RHOA, leading to its degradation by the proteasome Degradation of RHOA regulates the actin cytoskeleton and promotes synaptic transmission. The sequence is that of BTB/POZ domain-containing adapter for CUL3-mediated RhoA degradation protein 1 (KCTD13) from Homo sapiens (Human).